A 417-amino-acid polypeptide reads, in one-letter code: Calreticulin (417 aa).

A signal peptide spans 1–17 (MLLPVPLLLGLVGLAAA). The interval 18-197 (EPTIYFKEQF…NSQVESGSLE (180 aa)) is N-domain. Positions 26, 62, and 64 each coordinate Ca(2+). The residue at position 64 (lysine 64) is an N6-(2-hydroxyisobutyryl)lysine. Tyrosine 109, lysine 111, tyrosine 128, and aspartate 135 together coordinate an alpha-D-glucoside. Cysteine 137 and cysteine 163 are oxidised to a cystine. An N6-acetyllysine modification is found at lysine 159. The stretch at 191–202 (VESGSLEDDWDF) is one 1-1 repeat. A 4 X approximate repeats region spans residues 191 to 255 (VESGSLEDDW…DAKKPEDWDE (65 aa)). The tract at residues 193 to 277 (SGSLEDDWDF…NPEYKGEWKP (85 aa)) is disordered. Positions 198–308 (DDWDFLPPKK…YSPDSNIYAY (111 aa)) are P-domain. Positions 207–251 (KIKDPDAVKPEDWDERAKIDDPTDSKPEDWDKPEHIPDPDAKKPE) are enriched in basic and acidic residues. Lysine 209 carries the post-translational modification N6-acetyllysine. Tandem repeats lie at residues 210 to 221 (DPDAVKPEDWDE), 227 to 238 (DPTDSKPEDWDK), 244 to 255 (DPDAKKPEDWDE), 259 to 269 (GEWEPPVIQNP), 273 to 283 (GEWKPRQIDNP), and 287 to 297 (GTWIHPEIDNP). The interaction with PPIB stretch occupies residues 237–270 (DKPEHIPDPDAKKPEDWDEEMDGEWEPPVIQNPE). The span at 252-261 (DWDEEMDGEW) shows a compositional bias: acidic residues. Residues 259 to 297 (GEWEPPVIQNPEYKGEWKPRQIDNPDYKGTWIHPEIDNP) are 3 X approximate repeats. Residues 309-417 (ENFAVLGLDL…AAAGQAKDEL (109 aa)) are C-domain. An an alpha-D-glucoside-binding site is contributed by aspartate 317. Position 328 (aspartate 328) interacts with Ca(2+). Positions 350 to 417 (TKAAEKQMKD…AAAGQAKDEL (68 aa)) are disordered. Residues 352 to 379 (AAEKQMKDKQDEEQRLKEEEEEKKRKEE) show a composition bias toward basic and acidic residues. The span at 380–408 (EEVDKEDEEDKDEDEEEEDEKEEEEEEDA) shows a compositional bias: acidic residues. The Prevents secretion from ER motif lies at 414–417 (KDEL).

It belongs to the calreticulin family. Monomer. Component of an EIF2 complex at least composed of CELF1/CUGBP1, CALR, CALR3, EIF2S1, EIF2S2, HSP90B1 and HSPA5. Interacts with PDIA3/ERp57 and SPACA9. Interacts with TRIM21. Interacts with NR3C1. Interacts with PPIB. Interacts (via P-domain) with PDIA5. Interacts with CLCC1. As to expression, in blastocyst expressed in all blastomeres (at protein level). In embryos, expressed in spleen, kidney, liver, fat, muscle, ovary, granulosa cells and cumulus cells.

It is found in the endoplasmic reticulum lumen. The protein localises to the cytoplasm. It localises to the cytosol. Its subcellular location is the secreted. The protein resides in the extracellular space. It is found in the extracellular matrix. The protein localises to the cell surface. It localises to the sarcoplasmic reticulum lumen. Its subcellular location is the cytoplasmic vesicle. The protein resides in the secretory vesicle. It is found in the cortical granule. The protein localises to the cytolytic granule. Calcium-binding chaperone that promotes folding, oligomeric assembly and quality control in the endoplasmic reticulum (ER) via the calreticulin/calnexin cycle. This lectin interacts transiently with almost all of the monoglucosylated glycoproteins that are synthesized in the ER. Interacts with the DNA-binding domain of NR3C1 and mediates its nuclear export. Involved in maternal gene expression regulation. May participate in oocyte maturation via the regulation of calcium homeostasis. Present in the cortical granules of non-activated oocytes, is exocytosed during the cortical reaction in response to oocyte activation and might participate in the block to polyspermy. This Sus scrofa (Pig) protein is Calreticulin (CALR).